A 449-amino-acid chain; its full sequence is Alginate biosynthesis transcriptional regulatory protein AlgB (449 aa).

One can recognise a Response regulatory domain in the interval 10–124 (RILLVDDESA…QLRLAAAKQL (115 aa)). Asp59 bears the 4-aspartylphosphate mark. In terms of domain architecture, Sigma-54 factor interaction spans 147–376 (LESHSPAMAA…LRNVIERASI (230 aa)). ATP-binding positions include 175–182 (GESGSGKG) and 238–247 (ADGGTLFLDE). The segment at residues 426–445 (LDQAAKTLGIDASTLYRKRK) is a DNA-binding region (H-T-H motif).

Phosphorylated by KinB.

Its pathway is glycan biosynthesis; alginate biosynthesis [regulation]. Its function is as follows. Member of the two-component regulatory system AlgB/KinB involved in regulation of alginate biosynthesis genes. Positive regulator of the alginate biosynthetic gene AlgD. The sequence is that of Alginate biosynthesis transcriptional regulatory protein AlgB (algB) from Pseudomonas aeruginosa (strain ATCC 15692 / DSM 22644 / CIP 104116 / JCM 14847 / LMG 12228 / 1C / PRS 101 / PAO1).